The sequence spans 233 residues: Putative quercetin 2,3-dioxygenase PM1685 (233 aa).

A divalent metal cation is bound by residues His59, His61, His103, and Glu105.

Belongs to the pirin family. A divalent metal cation serves as cofactor.

The enzyme catalyses quercetin + O2 = 2-(3,4-dihydroxybenzoyloxy)-4,6-dihydroxybenzoate + CO. It functions in the pathway flavonoid metabolism; quercetin degradation. Putative quercetin 2,3-dioxygenase. The protein is Putative quercetin 2,3-dioxygenase PM1685 of Pasteurella multocida (strain Pm70).